The sequence spans 352 residues: MEIDILSLFPDYFASPLQATILGRAIKQGALSVRSRDIREFGLGKWKQVDDSPYNGEGMLLMAEPVVQAIRSIRRKKSKVIYLSPQGQLLSAKKSRELASCSHLVLLCGHYEGIDERALTAEVDEEISIGDYVLTNGCAAALVLVDALARFIPGILGNQESAEYDSLENGLLEGPQYTRPRVFEGESVPEVLLCGDHQKIADWRKQVSLERTRERRPDLYLQYFYGNSACLSTQEDLPRIEVVSPKTFSVVLEVQDLRKAKKFYSRMFGKECWDGDKLFLLGKTSLYLQQTKETRGPTTVFIELETDHDFVRFLKRWEMLGGELGEQGTGGFPLRQVFDLDGHIWVVSCVQK.

Residues Gly-109 and 129–134 each bind S-adenosyl-L-methionine; that span reads IGDYVL.

It belongs to the RNA methyltransferase TrmD family. Homodimer.

The protein localises to the cytoplasm. The catalysed reaction is guanosine(37) in tRNA + S-adenosyl-L-methionine = N(1)-methylguanosine(37) in tRNA + S-adenosyl-L-homocysteine + H(+). Functionally, specifically methylates guanosine-37 in various tRNAs. The polypeptide is tRNA (guanine-N(1)-)-methyltransferase (Chlamydia trachomatis serovar L2 (strain ATCC VR-902B / DSM 19102 / 434/Bu)).